The sequence spans 478 residues: Aspartyl/glutamyl-tRNA(Asn/Gln) amidotransferase subunit B (478 aa).

The protein belongs to the GatB/GatE family. GatB subfamily. In terms of assembly, heterotrimer of A, B and C subunits.

The catalysed reaction is L-glutamyl-tRNA(Gln) + L-glutamine + ATP + H2O = L-glutaminyl-tRNA(Gln) + L-glutamate + ADP + phosphate + H(+). The enzyme catalyses L-aspartyl-tRNA(Asn) + L-glutamine + ATP + H2O = L-asparaginyl-tRNA(Asn) + L-glutamate + ADP + phosphate + 2 H(+). In terms of biological role, allows the formation of correctly charged Asn-tRNA(Asn) or Gln-tRNA(Gln) through the transamidation of misacylated Asp-tRNA(Asn) or Glu-tRNA(Gln) in organisms which lack either or both of asparaginyl-tRNA or glutaminyl-tRNA synthetases. The reaction takes place in the presence of glutamine and ATP through an activated phospho-Asp-tRNA(Asn) or phospho-Glu-tRNA(Gln). In Pseudothermotoga lettingae (strain ATCC BAA-301 / DSM 14385 / NBRC 107922 / TMO) (Thermotoga lettingae), this protein is Aspartyl/glutamyl-tRNA(Asn/Gln) amidotransferase subunit B.